A 911-amino-acid polypeptide reads, in one-letter code: Isoleucine--tRNA ligase (911 aa).

Positions 57-67 (PYANGHIHIGH) match the 'HIGH' region motif. An L-isoleucyl-5'-AMP-binding site is contributed by glutamate 564. The short motif at 605 to 609 (KMSKS) is the 'KMSKS' region element. Lysine 608 is an ATP binding site. Zn(2+)-binding residues include cysteine 887, cysteine 890, cysteine 902, and cysteine 905.

The protein belongs to the class-I aminoacyl-tRNA synthetase family. IleS type 1 subfamily. In terms of assembly, monomer. Requires Zn(2+) as cofactor.

The protein localises to the cytoplasm. The enzyme catalyses tRNA(Ile) + L-isoleucine + ATP = L-isoleucyl-tRNA(Ile) + AMP + diphosphate. Its function is as follows. Catalyzes the attachment of isoleucine to tRNA(Ile). As IleRS can inadvertently accommodate and process structurally similar amino acids such as valine, to avoid such errors it has two additional distinct tRNA(Ile)-dependent editing activities. One activity is designated as 'pretransfer' editing and involves the hydrolysis of activated Val-AMP. The other activity is designated 'posttransfer' editing and involves deacylation of mischarged Val-tRNA(Ile). This Nautilia profundicola (strain ATCC BAA-1463 / DSM 18972 / AmH) protein is Isoleucine--tRNA ligase.